Consider the following 270-residue polypeptide: Phosphatidylglycerol--prolipoprotein diacylglyceryl transferase (270 aa).

Transmembrane regions (helical) follow at residues 14–34, 60–80, 103–123, 133–153, 181–201, 209–229, and 235–255; these read VAFT…ILAL, YFFW…IAIY, FVGI…LATI, LWQL…FGRI, PSQL…LFFY, GELI…CEFF, and GIGF…LMFF. R152 serves as a coordination point for a 1,2-diacyl-sn-glycero-3-phospho-(1'-sn-glycerol).

Belongs to the Lgt family.

It is found in the cell inner membrane. The enzyme catalyses L-cysteinyl-[prolipoprotein] + a 1,2-diacyl-sn-glycero-3-phospho-(1'-sn-glycerol) = an S-1,2-diacyl-sn-glyceryl-L-cysteinyl-[prolipoprotein] + sn-glycerol 1-phosphate + H(+). It participates in protein modification; lipoprotein biosynthesis (diacylglyceryl transfer). In terms of biological role, catalyzes the transfer of the diacylglyceryl group from phosphatidylglycerol to the sulfhydryl group of the N-terminal cysteine of a prolipoprotein, the first step in the formation of mature lipoproteins. The sequence is that of Phosphatidylglycerol--prolipoprotein diacylglyceryl transferase from Campylobacter curvus (strain 525.92).